The chain runs to 543 residues: MLRGIEIRGKVDKNVKSILTEECLTFLGELERRFGGIRKNLLQKRLDRQIDINNGILPSFLKDSDCKRATDKNWKCSSVPLEIQDRRVEITGPTDRKMVINALNSGAKVFMADFEDANCPNWENSIHGQQNMIDANNRTISFTSAEGRKYELNKQVAVLFVRPRGWHLNEDHLAIDGLSMSGSLFDFGCYIFHNHQILKNRNSNPYFYLPKMESHLEARLWNDVFVFSQNYLGMPIGTIKATVLIETILASFEMDEILYELRDHSAGLNCGRWDYIFSFIKKFQSYPDKMLPDRAKVTMTSPFMDSYVKLLIYTCHKRGVHAMGGMAAQIPIKNNEQANNAAMEKVRLDKQREVRAGHDGTWVAHPALIPIAMEQFNTHMKSQNQISYIPSSTAPNFEEIAKSLLSVDPVKPGDITEDGFRSNIVVGILYLEAWLNGNGCVPIHNLMEDAATAEISRSQIWQWIKHKAPLPDGKSFVTLQYYNRIFKEESDKLEKAHPNSKTLTDAIQIFNNLIVSPNFIDFLTPSCYKFVVDSERKTFSPKL.

The active-site Proton acceptor is R162. D449 serves as the catalytic Proton donor.

The protein belongs to the malate synthase family.

The enzyme catalyses glyoxylate + acetyl-CoA + H2O = (S)-malate + CoA + H(+). Its pathway is carbohydrate metabolism; glyoxylate cycle; (S)-malate from isocitrate: step 2/2. The polypeptide is Malate synthase (masA) (Dictyostelium discoideum (Social amoeba)).